We begin with the raw amino-acid sequence, 630 residues long: Probable potassium transport system protein Kup 2 (630 aa).

12 helical membrane-spanning segments follow: residues 17–37 (FWAL…TSPL), 56–76 (VIVL…VTAK), 108–128 (VFLM…SMIT), 145–165 (PALE…LFAF), 176–196 (AFGP…LIHI), 214–234 (FMLS…LAVT), 255–275 (WLFF…ALVL), 293–313 (FLVP…QAVI), 345–365 (IYLP…VLLF), 375–395 (YGIA…VVIW), 402–422 (PAAA…FFSA), and 427–447 (LLEG…LIWV).

Belongs to the HAK/KUP transporter (TC 2.A.72) family.

The protein resides in the cell inner membrane. The enzyme catalyses K(+)(in) + H(+)(in) = K(+)(out) + H(+)(out). In terms of biological role, transport of potassium into the cell. Likely operates as a K(+):H(+) symporter. In Rhodopseudomonas palustris (strain BisB18), this protein is Probable potassium transport system protein Kup 2.